A 402-amino-acid chain; its full sequence is Probable tRNA pseudouridine synthase D (402 aa).

The active-site Nucleophile is D94. In terms of domain architecture, TRUD spans 175–364 (YILNYYGTQR…PGTRRKLITK (190 aa)).

The protein belongs to the pseudouridine synthase TruD family.

It catalyses the reaction uridine(13) in tRNA = pseudouridine(13) in tRNA. Could be responsible for synthesis of pseudouridine from uracil-13 in transfer RNAs. This chain is Probable tRNA pseudouridine synthase D, found in Methanococcus aeolicus (strain ATCC BAA-1280 / DSM 17508 / OCM 812 / Nankai-3).